Reading from the N-terminus, the 354-residue chain is Alkanal monooxygenase alpha chain (354 aa).

The protein belongs to the bacterial luciferase oxidoreductase family. In terms of assembly, heterodimer of an alpha and a beta chain.

It catalyses the reaction a long-chain fatty aldehyde + FMNH2 + O2 = a long-chain fatty acid + hnu + FMN + H2O + 2 H(+). In terms of biological role, light-emitting reaction in luminous bacteria. In Aliivibrio fischeri (Vibrio fischeri), this protein is Alkanal monooxygenase alpha chain (luxA).